Consider the following 525-residue polypeptide: COP9 signalosome complex subunit 1b (525 aa).

One can recognise a PCI domain in the interval 298–460 (HFLNANFDHC…KILFAKEADQ (163 aa)).

It belongs to the CSN1 family. In terms of assembly, component of the CSN complex, probably composed of CSN1b, alien/CSN2, CSN3, CSN4, CSN5, CSN6, CSN7 and CSN8.

It localises to the cytoplasm. Its subcellular location is the nucleus. Essential component of the COP9 signalosome complex (CSN), a complex involved in various cellular and developmental processes. The CSN complex is an essential regulator of the ubiquitin (Ubl) conjugation pathway by mediating the deneddylation of the cullin subunits of the SCF-type E3 ligase complexes, leading to decrease the Ubl ligase activity of SCF. The CSN complex plays an essential role in oogenesis and embryogenesis and is required for proper photoreceptor R cell differentiation and promote lamina glial cell migration or axon targeting. It also promotes Ubl-dependent degradation of cyclin E (CycE) during early oogenesis. This Drosophila melanogaster (Fruit fly) protein is COP9 signalosome complex subunit 1b (CSN1b).